The sequence spans 325 residues: Glutarate 2-hydroxylase (325 aa).

3 residues coordinate Fe cation: His160, Asp162, and His292.

The protein belongs to the glutarate hydroxylase family. As to quaternary structure, homotetramer. Requires Fe(2+) as cofactor.

The catalysed reaction is glutarate + 2-oxoglutarate + O2 = (S)-2-hydroxyglutarate + succinate + CO2. It functions in the pathway amino-acid degradation. Acts as an alpha-ketoglutarate-dependent dioxygenase catalyzing hydroxylation of glutarate (GA) to L-2-hydroxyglutarate (L2HG). Functions in a L-lysine degradation pathway that proceeds via cadaverine, glutarate and L-2-hydroxyglutarate. This Citrobacter koseri (strain ATCC BAA-895 / CDC 4225-83 / SGSC4696) protein is Glutarate 2-hydroxylase.